Here is a 231-residue protein sequence, read N- to C-terminus: Large ribosomal subunit protein uL1 (231 aa).

The protein belongs to the universal ribosomal protein uL1 family. As to quaternary structure, part of the 50S ribosomal subunit.

Its function is as follows. Binds directly to 23S rRNA. The L1 stalk is quite mobile in the ribosome, and is involved in E site tRNA release. Functionally, protein L1 is also a translational repressor protein, it controls the translation of the L11 operon by binding to its mRNA. This is Large ribosomal subunit protein uL1 from Legionella pneumophila (strain Paris).